The chain runs to 223 residues: Guanylate kinase (223 aa).

Residues 6–183 (GRLFVMTGAS…AVADFLAILT (178 aa)) enclose the Guanylate kinase-like domain. An ATP-binding site is contributed by 13–20 (GASGVGKG).

Belongs to the guanylate kinase family.

Its subcellular location is the cytoplasm. The catalysed reaction is GMP + ATP = GDP + ADP. In terms of biological role, essential for recycling GMP and indirectly, cGMP. The protein is Guanylate kinase of Thermus thermophilus (strain ATCC 27634 / DSM 579 / HB8).